Reading from the N-terminus, the 60-residue chain is UPF0434 protein KPK_3615 (60 aa).

Belongs to the UPF0434 family.

This is UPF0434 protein KPK_3615 from Klebsiella pneumoniae (strain 342).